The primary structure comprises 267 residues: 4-hydroxy-tetrahydrodipicolinate reductase (267 aa).

Residues 12-17 (GARGRM), aspartate 38, 100-102 (GTT), and 126-129 (APNF) each bind NAD(+). The Proton donor/acceptor role is filled by histidine 156. Histidine 157 is a binding site for (S)-2,3,4,5-tetrahydrodipicolinate. Lysine 160 functions as the Proton donor in the catalytic mechanism. Residue 166 to 167 (GT) coordinates (S)-2,3,4,5-tetrahydrodipicolinate.

It belongs to the DapB family.

Its subcellular location is the cytoplasm. It carries out the reaction (S)-2,3,4,5-tetrahydrodipicolinate + NAD(+) + H2O = (2S,4S)-4-hydroxy-2,3,4,5-tetrahydrodipicolinate + NADH + H(+). The catalysed reaction is (S)-2,3,4,5-tetrahydrodipicolinate + NADP(+) + H2O = (2S,4S)-4-hydroxy-2,3,4,5-tetrahydrodipicolinate + NADPH + H(+). The protein operates within amino-acid biosynthesis; L-lysine biosynthesis via DAP pathway; (S)-tetrahydrodipicolinate from L-aspartate: step 4/4. Catalyzes the conversion of 4-hydroxy-tetrahydrodipicolinate (HTPA) to tetrahydrodipicolinate. The chain is 4-hydroxy-tetrahydrodipicolinate reductase from Bacillus pumilus (strain SAFR-032).